The chain runs to 509 residues: Glycogen synthase 2 (509 aa).

Lys-15 is a binding site for ADP-alpha-D-glucose.

It belongs to the glycosyltransferase 1 family. Bacterial/plant glycogen synthase subfamily.

The enzyme catalyses [(1-&gt;4)-alpha-D-glucosyl](n) + ADP-alpha-D-glucose = [(1-&gt;4)-alpha-D-glucosyl](n+1) + ADP + H(+). It functions in the pathway glycan biosynthesis; glycogen biosynthesis. Functionally, synthesizes alpha-1,4-glucan chains using ADP-glucose. The protein is Glycogen synthase 2 (glgA2) of Agrobacterium fabrum (strain C58 / ATCC 33970) (Agrobacterium tumefaciens (strain C58)).